The sequence spans 242 residues: MHTLFISDLHLSPKHPDITASFIQFMREEAIKADALYVLGDLFDFWIGDDDPTTFAEQIKSEFRQLTQQGVPCYFTKGNRDFLVGKRFAQQTGVQLLPDEAVIDLYGQKAVVLHGDTLCTQDTRYLEFRAKVHQPWLQRLFGLLPFALKQKLVRKIQSDIRDDKQHKSMMIMDVTPSEVIAVMHRYNVDLMIHGHTHRPAIHSIQTDDQTLKTRIVLGDWYSQSSILVYSKQLATHYCRDHS.

Residues D8, H10, D41, N79, and H114 each coordinate Mn(2+). 79–80 lines the substrate pocket; that stretch reads NR. Substrate-binding residues include D122, K164, K167, and H195. Mn(2+) is bound by residues H195 and H197.

This sequence belongs to the LpxH family. Mn(2+) is required as a cofactor.

The protein localises to the cell inner membrane. It carries out the reaction UDP-2-N,3-O-bis[(3R)-3-hydroxytetradecanoyl]-alpha-D-glucosamine + H2O = 2-N,3-O-bis[(3R)-3-hydroxytetradecanoyl]-alpha-D-glucosaminyl 1-phosphate + UMP + 2 H(+). It participates in glycolipid biosynthesis; lipid IV(A) biosynthesis; lipid IV(A) from (3R)-3-hydroxytetradecanoyl-[acyl-carrier-protein] and UDP-N-acetyl-alpha-D-glucosamine: step 4/6. Its function is as follows. Hydrolyzes the pyrophosphate bond of UDP-2,3-diacylglucosamine to yield 2,3-diacylglucosamine 1-phosphate (lipid X) and UMP by catalyzing the attack of water at the alpha-P atom. Involved in the biosynthesis of lipid A, a phosphorylated glycolipid that anchors the lipopolysaccharide to the outer membrane of the cell. The sequence is that of UDP-2,3-diacylglucosamine hydrolase from Vibrio cholerae serotype O1 (strain ATCC 39315 / El Tor Inaba N16961).